A 552-amino-acid polypeptide reads, in one-letter code: Hydroxylamine reductase (552 aa).

The [2Fe-2S] cluster site is built by cysteine 5, cysteine 8, cysteine 20, and cysteine 27. Positions 251, 275, 319, 407, 435, 460, 494, and 496 each coordinate hybrid [4Fe-2O-2S] cluster. Cysteine 407 carries the post-translational modification Cysteine persulfide.

This sequence belongs to the HCP family. [2Fe-2S] cluster is required as a cofactor. Requires hybrid [4Fe-2O-2S] cluster as cofactor.

Its subcellular location is the cytoplasm. The catalysed reaction is A + NH4(+) + H2O = hydroxylamine + AH2 + H(+). Its function is as follows. Catalyzes the reduction of hydroxylamine to form NH(3) and H(2)O. This chain is Hydroxylamine reductase, found in Shigella sonnei (strain Ss046).